Consider the following 350-residue polypeptide: MVIATVAGFMLGGAAHAEEKLKVGFIYIGPPGDFGWTYQHDQARKELVEALGDKVETTFLENVAEGADAERSIKRIARAGNKLIFTTSFGYMDPTVKVAKKFPDVKFEHATGYKTADNMSAYNARFYEGRYVQGVIAAKMSKKGIAGYIGSVPVPEVVQGINSFMLGAQSVNPDFRVKVIWVNSWFDPGKEADAAKALIDQGVDIITQHTDSTAAIQVAHDRGIKAFGQASDMIKFAPDTQLTAVVDEWGPYYIDRAKAVLDGTWKSQNIWWGMKEGLVKMAPFTNMPDDVKKLAEETEARIKSGELNPFTGPIKKQDGSEWLKAGEKADDQTLLGMNFYVAGVDDKLPQ.

The first 17 residues, 1 to 17, serve as a signal peptide directing secretion; it reads MVIATVAGFMLGGAAHA. Residues W36, W185, and D211 each coordinate adenine.

The protein belongs to the BMP lipoprotein family.

Binds adenine and probably also other purines, such as guanine. May play a role in adenine and guanine uptake. May be part of an ABC-type uptake system for adenine and similar ligands. This Brucella abortus (strain 2308) protein is Purine-binding protein BAB2_0673.